A 453-amino-acid chain; its full sequence is uncharacterized protein (453 aa).

The 59-residue stretch at 5–63 (LLKKNQSIELTIEDLTHDGSGVGKIDGYPFFIPNTLPGEKVTAKIIKLNKNYGFARMEN) folds into the TRAM domain. 4 residues coordinate [4Fe-4S] cluster: Cys-76, Cys-82, Cys-85, and Cys-162. Residues Gln-285, Tyr-314, Glu-335, and Asp-383 each coordinate S-adenosyl-L-methionine. The active-site Nucleophile is the Cys-410.

It belongs to the class I-like SAM-binding methyltransferase superfamily. RNA M5U methyltransferase family.

This is an uncharacterized protein from Listeria monocytogenes serovar 1/2a (strain ATCC BAA-679 / EGD-e).